Reading from the N-terminus, the 988-residue chain is Protein argonaute 10 (988 aa).

A compositionally biased stretch (basic and acidic residues) spans 1 to 11 (MPIRQMKDSSE). The interval 1–103 (MPIRQMKDSS…PPSQTTSSAV (103 aa)) is disordered. Residues 41 to 57 (PVTVTTPATVTQSQASS) show a composition bias toward low complexity. A compositionally biased stretch (basic residues) spans 64–73 (NRSRRRNRGG). Positions 338-451 (PVIEFVAQLL…LPMEACKIVE (114 aa)) constitute a PAZ domain. Residues 625–946 (LLLAILPDNN…AAFRARFYLE (322 aa)) enclose the Piwi domain.

This sequence belongs to the argonaute family. Ago subfamily. In terms of assembly, interacts with GATA18/HAN and KNAT1/BP. Interacts with RICE1 and RICE2 that act as cofactors. Expressed in roots, stems, leaves, developing embryo, siliques, inflorescences, provascular tissue, shoot apical meristem (SAM) and adaxial (upper) sides of lateral organ primordia. Observed in the floral meristem, the adaxial side of sepal primordia, and the provascular tissue.

Its subcellular location is the cytoplasm. In terms of biological role, involved in RNA-mediated post-transcriptional gene silencing (PTGS). Main component of the RNA-induced silencing complex (RISC) that binds to a short guide RNA such as a microRNA (miRNA) or small interfering RNA (siRNA). RISC uses the mature miRNA or siRNA as a guide for slicer-directed cleavage of homologous mRNAs to repress gene expression. Required for reliable formation of primary and axillary shoot apical meristems. Specifies leaf adaxial identity by repressing the miR165 and miR166 microRNAs in the embryonic shoot apex, in the shoot apical meristem (SAM) and leaf. Represses the microRNA miR398 which targets CCS1 chaperone mRNAs for translational inhibition. Acts as a negative regulator of AGO1 protein level. Like AGO1, is required for stem cell function and organ polarity. Unlike AGO1, is not subjected to small RNA-mediated repression itself. Essential for multiple processes in development. Coregulates, with GATA18/HAN, the shoot apical meristem (SAM) organization. The protein is Protein argonaute 10 of Arabidopsis thaliana (Mouse-ear cress).